The sequence spans 453 residues: Acid phosphatase (453 aa).

Residues 1-18 (MFLQNLFLGFLAVVCANA) form the signal peptide. The active-site Nucleophile is histidine 69. Asparagine 95, asparagine 151, asparagine 183, asparagine 193, asparagine 243, and asparagine 319 each carry an N-linked (GlcNAc...) asparagine glycan. Aspartate 331 functions as the Proton donor in the catalytic mechanism. Residues asparagine 410, asparagine 429, and asparagine 443 are each glycosylated (N-linked (GlcNAc...) asparagine).

The protein belongs to the histidine acid phosphatase family.

It is found in the secreted. Its subcellular location is the cell wall. The catalysed reaction is a phosphate monoester + H2O = an alcohol + phosphate. The sequence is that of Acid phosphatase (pho1) from Schizosaccharomyces pombe (strain 972 / ATCC 24843) (Fission yeast).